The sequence spans 179 residues: Large ribosomal subunit protein uL5 (179 aa).

The protein belongs to the universal ribosomal protein uL5 family. As to quaternary structure, part of the 50S ribosomal subunit; part of the 5S rRNA/L5/L18/L25 subcomplex. Contacts the 5S rRNA and the P site tRNA. Forms a bridge to the 30S subunit in the 70S ribosome.

Its function is as follows. This is one of the proteins that bind and probably mediate the attachment of the 5S RNA into the large ribosomal subunit, where it forms part of the central protuberance. In the 70S ribosome it contacts protein S13 of the 30S subunit (bridge B1b), connecting the 2 subunits; this bridge is implicated in subunit movement. Contacts the P site tRNA; the 5S rRNA and some of its associated proteins might help stabilize positioning of ribosome-bound tRNAs. This chain is Large ribosomal subunit protein uL5, found in Shewanella oneidensis (strain ATCC 700550 / JCM 31522 / CIP 106686 / LMG 19005 / NCIMB 14063 / MR-1).